The following is a 626-amino-acid chain: Probable metalloendopeptidase G1-type (626 aa).

His42 contributes to the Zn(2+) binding site. Glu45 is a catalytic residue. His46 lines the Zn(2+) pocket.

It belongs to the peptidase M44 family. It depends on Zn(2+) as a cofactor.

Its function is as follows. Seems to be involved in viral proteins maturation by cleavage at Ala-Gly-|-Xaa motifs. This Fowlpox virus (strain NVSL) (FPV) protein is Probable metalloendopeptidase G1-type.